Consider the following 242-residue polypeptide: Methylthioribulose-1-phosphate dehydratase (242 aa).

Residue cysteine 97 coordinates substrate. Zn(2+)-binding residues include histidine 115 and histidine 117. The active-site Proton donor/acceptor is glutamate 139. Histidine 195 contacts Zn(2+).

This sequence belongs to the aldolase class II family. MtnB subfamily. Homotetramer. Interacts with APAF1. May interact with CASP1. Zn(2+) is required as a cofactor.

It is found in the cytoplasm. It catalyses the reaction 5-(methylsulfanyl)-D-ribulose 1-phosphate = 5-methylsulfanyl-2,3-dioxopentyl phosphate + H2O. It functions in the pathway amino-acid biosynthesis; L-methionine biosynthesis via salvage pathway; L-methionine from S-methyl-5-thio-alpha-D-ribose 1-phosphate: step 2/6. Its function is as follows. Catalyzes the dehydration of methylthioribulose-1-phosphate (MTRu-1-P) into 2,3-diketo-5-methylthiopentyl-1-phosphate (DK-MTP-1-P). Functions in the methionine salvage pathway, which plays a key role in cancer, apoptosis, microbial proliferation and inflammation. May inhibit the CASP1-related inflammatory response (pyroptosis), the CASP9-dependent apoptotic pathway and the cytochrome c-dependent and APAF1-mediated cell death. This is Methylthioribulose-1-phosphate dehydratase from Bos taurus (Bovine).